The primary structure comprises 105 residues: Large ribosomal subunit protein uL23 (105 aa).

Belongs to the universal ribosomal protein uL23 family. Part of the 50S ribosomal subunit. Contacts protein L29, and trigger factor when it is bound to the ribosome.

Functionally, one of the early assembly proteins it binds 23S rRNA. One of the proteins that surrounds the polypeptide exit tunnel on the outside of the ribosome. Forms the main docking site for trigger factor binding to the ribosome. In Ureaplasma parvum serovar 3 (strain ATCC 27815 / 27 / NCTC 11736), this protein is Large ribosomal subunit protein uL23.